Reading from the N-terminus, the 240-residue chain is UDP-2,3-diacylglucosamine hydrolase (240 aa).

D9, H11, D43, N81, and H116 together coordinate Mn(2+). 81–82 (NR) contributes to the substrate binding site. Residues D124, S162, K166, K169, and H197 each coordinate substrate. 2 residues coordinate Mn(2+): H197 and H199.

Belongs to the LpxH family. Mn(2+) serves as cofactor.

The protein resides in the cell inner membrane. The catalysed reaction is UDP-2-N,3-O-bis[(3R)-3-hydroxytetradecanoyl]-alpha-D-glucosamine + H2O = 2-N,3-O-bis[(3R)-3-hydroxytetradecanoyl]-alpha-D-glucosaminyl 1-phosphate + UMP + 2 H(+). It participates in glycolipid biosynthesis; lipid IV(A) biosynthesis; lipid IV(A) from (3R)-3-hydroxytetradecanoyl-[acyl-carrier-protein] and UDP-N-acetyl-alpha-D-glucosamine: step 4/6. Functionally, hydrolyzes the pyrophosphate bond of UDP-2,3-diacylglucosamine to yield 2,3-diacylglucosamine 1-phosphate (lipid X) and UMP by catalyzing the attack of water at the alpha-P atom. Involved in the biosynthesis of lipid A, a phosphorylated glycolipid that anchors the lipopolysaccharide to the outer membrane of the cell. This is UDP-2,3-diacylglucosamine hydrolase from Neisseria meningitidis serogroup B (strain ATCC BAA-335 / MC58).